The sequence spans 312 residues: Acyl-CoA C20 Delta5-desaturase (312 aa).

Helical transmembrane passes span 45-65 (VFHILFIGGLHVLCLFAPSTF) and 69-89 (SFWVCFALYAICGVFGTTLSF). Positions 90, 95, 127, 130, and 131 each coordinate Fe cation. The Histidine box-1 signature appears at 90–95 (HRNLTH). The Histidine box-2 motif lies at 127–131 (HRYHH). Residues 193–213 (LQAALLYLFGGFPFIVWGMAV) form a helical membrane-spanning segment. Fe cation-binding residues include His230, His259, His262, and His263. The short motif at 259 to 263 (HNNHH) is the Histidine box-3 element.

The protein belongs to the fatty acid desaturase type 1 family. Requires Fe(2+) as cofactor.

The protein localises to the membrane. It carries out the reaction (11Z,14Z)-eicosadienoyl-CoA + AH2 + O2 = (5Z,11Z,14Z)-eicosatrienoyl-CoA + A + 2 H2O. It catalyses the reaction (11Z,14Z,17Z)-eicosatrienoyl-CoA + AH2 + O2 = (5Z,11Z,14Z,17Z)-eicosatetraenoyl-CoA + A + 2 H2O. The protein operates within lipid metabolism; polyunsaturated fatty acid biosynthesis. Catalyzes the desaturation of 20:2Delta(11,14) and 20:3Delta(11,14,17) to generate sciadonic acid (20:3Delta(5,11,14)) and juniperonic acid (20:4Delta(5,11,14,17)). The chain is Acyl-CoA C20 Delta5-desaturase from Anemone leveillei (Windflower).